A 202-amino-acid chain; its full sequence is Large ribosomal subunit protein bL25 (202 aa).

Positions 180–202 (PKQEAFEEDAEPSPGEEPEGENQ) are disordered. Acidic residues predominate over residues 185-202 (FEEDAEPSPGEEPEGENQ).

The protein belongs to the bacterial ribosomal protein bL25 family. CTC subfamily. Part of the 50S ribosomal subunit; part of the 5S rRNA/L5/L18/L25 subcomplex. Contacts the 5S rRNA. Binds to the 5S rRNA independently of L5 and L18.

Functionally, this is one of the proteins that binds to the 5S RNA in the ribosome where it forms part of the central protuberance. This Bacillus velezensis (strain DSM 23117 / BGSC 10A6 / LMG 26770 / FZB42) (Bacillus amyloliquefaciens subsp. plantarum) protein is Large ribosomal subunit protein bL25.